The chain runs to 101 residues: Small ribosomal subunit protein uS14A (101 aa).

The segment at 29–60 (EIIRSPRSTPEQRTAAQNELAHQPRDASAVRV) is disordered. The span at 34–45 (PRSTPEQRTAAQ) shows a compositional bias: polar residues.

This sequence belongs to the universal ribosomal protein uS14 family. In terms of assembly, part of the 30S ribosomal subunit. Contacts proteins S3 and S10.

Binds 16S rRNA, required for the assembly of 30S particles and may also be responsible for determining the conformation of the 16S rRNA at the A site. The polypeptide is Small ribosomal subunit protein uS14A (Mycolicibacterium paratuberculosis (strain ATCC BAA-968 / K-10) (Mycobacterium paratuberculosis)).